The primary structure comprises 101 residues: Urease subunit beta (101 aa).

The protein belongs to the urease beta subunit family. In terms of assembly, heterotrimer of UreA (gamma), UreB (beta) and UreC (alpha) subunits. Three heterotrimers associate to form the active enzyme.

The protein resides in the cytoplasm. The enzyme catalyses urea + 2 H2O + H(+) = hydrogencarbonate + 2 NH4(+). Its pathway is nitrogen metabolism; urea degradation; CO(2) and NH(3) from urea (urease route): step 1/1. This Burkholderia cenocepacia (strain ATCC BAA-245 / DSM 16553 / LMG 16656 / NCTC 13227 / J2315 / CF5610) (Burkholderia cepacia (strain J2315)) protein is Urease subunit beta.